A 545-amino-acid polypeptide reads, in one-letter code: Membrane protein insertase YidC (545 aa).

4 consecutive transmembrane segments (helical) span residues Ile350–Tyr370, Leu424–Val444, Ala461–Leu481, and Pro498–Ile518.

The protein belongs to the OXA1/ALB3/YidC family. Type 1 subfamily. Interacts with the Sec translocase complex via SecD. Specifically interacts with transmembrane segments of nascent integral membrane proteins during membrane integration.

It localises to the cell inner membrane. Functionally, required for the insertion and/or proper folding and/or complex formation of integral membrane proteins into the membrane. Involved in integration of membrane proteins that insert both dependently and independently of the Sec translocase complex, as well as at least some lipoproteins. Aids folding of multispanning membrane proteins. The chain is Membrane protein insertase YidC from Neisseria meningitidis serogroup A / serotype 4A (strain DSM 15465 / Z2491).